Here is a 291-residue protein sequence, read N- to C-terminus: Release factor glutamine methyltransferase (291 aa).

S-adenosyl-L-methionine contacts are provided by residues 127-131 (GTGSG), aspartate 150, tryptophan 179, and asparagine 196. Substrate is bound at residue 196-199 (NPPY).

This sequence belongs to the protein N5-glutamine methyltransferase family. PrmC subfamily.

The catalysed reaction is L-glutaminyl-[peptide chain release factor] + S-adenosyl-L-methionine = N(5)-methyl-L-glutaminyl-[peptide chain release factor] + S-adenosyl-L-homocysteine + H(+). Functionally, methylates the class 1 translation termination release factors RF1/PrfA and RF2/PrfB on the glutamine residue of the universally conserved GGQ motif. This Thermosynechococcus vestitus (strain NIES-2133 / IAM M-273 / BP-1) protein is Release factor glutamine methyltransferase.